A 321-amino-acid polypeptide reads, in one-letter code: N-acetyl-gamma-glutamyl-phosphate reductase (321 aa).

Residue Cys131 is part of the active site.

This sequence belongs to the NAGSA dehydrogenase family. Type 1 subfamily.

Its subcellular location is the cytoplasm. The catalysed reaction is N-acetyl-L-glutamate 5-semialdehyde + phosphate + NADP(+) = N-acetyl-L-glutamyl 5-phosphate + NADPH + H(+). It functions in the pathway amino-acid biosynthesis; L-arginine biosynthesis; N(2)-acetyl-L-ornithine from L-glutamate: step 3/4. In terms of biological role, catalyzes the NADPH-dependent reduction of N-acetyl-5-glutamyl phosphate to yield N-acetyl-L-glutamate 5-semialdehyde. The chain is N-acetyl-gamma-glutamyl-phosphate reductase from Christiangramia forsetii (strain DSM 17595 / CGMCC 1.15422 / KT0803) (Gramella forsetii).